The primary structure comprises 78 residues: Small ribosomal subunit protein bS18 (78 aa).

This sequence belongs to the bacterial ribosomal protein bS18 family. As to quaternary structure, part of the 30S ribosomal subunit. Forms a tight heterodimer with protein bS6.

Functionally, binds as a heterodimer with protein bS6 to the central domain of the 16S rRNA, where it helps stabilize the platform of the 30S subunit. The chain is Small ribosomal subunit protein bS18 from Lactobacillus johnsonii (strain CNCM I-12250 / La1 / NCC 533).